The sequence spans 137 residues: Nucleoside diphosphate kinase (137 aa).

Lys11, Phe59, Arg87, Thr93, Arg104, and Asn114 together coordinate ATP. The active-site Pros-phosphohistidine intermediate is His117.

It belongs to the NDK family. In terms of assembly, homotetramer. It depends on Mg(2+) as a cofactor.

The protein localises to the cytoplasm. The enzyme catalyses a 2'-deoxyribonucleoside 5'-diphosphate + ATP = a 2'-deoxyribonucleoside 5'-triphosphate + ADP. It catalyses the reaction a ribonucleoside 5'-diphosphate + ATP = a ribonucleoside 5'-triphosphate + ADP. Its function is as follows. Major role in the synthesis of nucleoside triphosphates other than ATP. The ATP gamma phosphate is transferred to the NDP beta phosphate via a ping-pong mechanism, using a phosphorylated active-site intermediate. This is Nucleoside diphosphate kinase from Frankia casuarinae (strain DSM 45818 / CECT 9043 / HFP020203 / CcI3).